We begin with the raw amino-acid sequence, 224 residues long: Putative O-methyltransferase MLBr01075 (224 aa).

S-adenosyl-L-methionine contacts are provided by residues valine 51, glutamate 73, 75–76 (GT), serine 81, aspartate 99, and isoleucine 100. Aspartate 147 lines the substrate pocket. An S-adenosyl-L-methionine-binding site is contributed by aspartate 149.

Belongs to the class I-like SAM-binding methyltransferase superfamily. Cation-dependent O-methyltransferase family.

In Mycobacterium leprae (strain Br4923), this protein is Putative O-methyltransferase MLBr01075.